The following is a 164-amino-acid chain: Diphosphoinositol polyphosphate phosphohydrolase 3-beta (164 aa).

Substrate-binding positions include R9, 17 to 19 (KKR), and 38 to 40 (SSR). Residues 17-144 (KKRAACLCFR…VHAEYLEKLK (128 aa)) enclose the Nudix hydrolase domain. Mg(2+)-binding residues include G49 and E65. The Nudix box motif lies at 50-71 (GGMEPEEEPGGAAVREVYEEAG). E68 functions as the Proton acceptor in the catalytic mechanism. E69 contacts Mg(2+). Substrate contacts are provided by residues 89-91 (RKH), R115, and K133. Residues 144 to 164 (KLGGSPTNGNSMAPSSPDSDP) form a disordered region. Over residues 148-164 (SPTNGNSMAPSSPDSDP) the composition is skewed to polar residues.

The protein belongs to the Nudix hydrolase family. DIPP subfamily. Requires Mg(2+) as cofactor. The cofactor is Mn(2+). In terms of tissue distribution, mainly expressed in testis and, at lower level in brain. According to PubMed:12121577, it is also expressed in pancreas and weakly expressed in thymus, prostate, ovary, lung, small intestine and heart.

The protein resides in the cytoplasm. It catalyses the reaction diphospho-myo-inositol polyphosphate + H2O = myo-inositol polyphosphate + phosphate.. It carries out the reaction P(1),P(6)-bis(5'-adenosyl) hexaphosphate + H2O = adenosine 5'-pentaphosphate + AMP + 2 H(+). The enzyme catalyses P(1),P(5)-bis(5'-adenosyl) pentaphosphate + H2O = adenosine 5'-tetraphosphate + AMP + 2 H(+). In terms of biological role, cleaves a beta-phosphate from the diphosphate groups in PP-InsP5 (diphosphoinositol pentakisphosphate), suggesting that it may play a role in signal transduction. Also able to catalyze the hydrolysis of dinucleoside oligophosphates, with Ap6A and Ap5A being the preferred substrates. The major reaction products are ADP and p4a from Ap6A and ADP and ATP from Ap5A. Also able to hydrolyze 5-phosphoribose 1-diphosphate. This is Diphosphoinositol polyphosphate phosphohydrolase 3-beta from Homo sapiens (Human).